Reading from the N-terminus, the 319-residue chain is Acetyl-coenzyme A carboxylase carboxyl transferase subunit alpha (319 aa).

Residues 35–296 (NLDEEVQRLR…KAQLLDDLSE (262 aa)) form the CoA carboxyltransferase C-terminal domain.

This sequence belongs to the AccA family. Acetyl-CoA carboxylase is a heterohexamer composed of biotin carboxyl carrier protein (AccB), biotin carboxylase (AccC) and two subunits each of ACCase subunit alpha (AccA) and ACCase subunit beta (AccD).

It is found in the cytoplasm. The enzyme catalyses N(6)-carboxybiotinyl-L-lysyl-[protein] + acetyl-CoA = N(6)-biotinyl-L-lysyl-[protein] + malonyl-CoA. It functions in the pathway lipid metabolism; malonyl-CoA biosynthesis; malonyl-CoA from acetyl-CoA: step 1/1. In terms of biological role, component of the acetyl coenzyme A carboxylase (ACC) complex. First, biotin carboxylase catalyzes the carboxylation of biotin on its carrier protein (BCCP) and then the CO(2) group is transferred by the carboxyltransferase to acetyl-CoA to form malonyl-CoA. The polypeptide is Acetyl-coenzyme A carboxylase carboxyl transferase subunit alpha (Sodalis glossinidius (strain morsitans)).